The primary structure comprises 209 residues: T-cell surface glycoprotein CD8 beta chain (209 aa).

Residues 1–21 (MRPRMWLLLSAQLAALHGNSV) form the signal peptide. The Ig-like V-type domain occupies 22–131 (LQQTPAYIMV…TLIFGTGTQL (110 aa)). The Extracellular portion of the chain corresponds to 22–169 (LQQTPAYIMV…ETRKGPLCSP (148 aa)). A disulfide bridge links Cys-41 with Cys-115. Residue Asn-101 is glycosylated (N-linked (GlcNAc...) asparagine). The chain crosses the membrane as a helical span at residues 170 to 190 (ITLSLLVAGILVLLVSLGVAI). Residues 191-209 (HLYCRQRRARLRFMKQFYK) lie on the Cytoplasmic side of the membrane.

As to quaternary structure, forms disulfide-linked heterodimers with CD8A at the cell surface. Interacts with CD3D; this interaction couples TCR-CD3 with CD8. Interacts with LCK. Post-translationally, phosphorylated as a consequence of T-cell activation. In terms of processing, palmitoylated at the cytoplasmic tail and thereby targets the heterodimer CD8A/CD8B to lipid rafts unlike CD8A homodimers.

The protein localises to the cell membrane. Its function is as follows. Integral membrane glycoprotein that plays an essential role in the immune response and serves multiple functions in responses against both external and internal offenses. In T-cells, functions primarily as a coreceptor for MHC class I molecule:peptide complex. The antigens presented by class I peptides are derived from cytosolic proteins while class II derived from extracellular proteins. Interacts simultaneously with the T-cell receptor (TCR) and the MHC class I proteins presented by antigen presenting cells (APCs). In turn, recruits the Src kinase LCK to the vicinity of the TCR-CD3 complex. A palmitoylation site in the cytoplasmic tail of CD8B chain contributes to partitioning of CD8 into the plasma membrane lipid rafts where signaling proteins are enriched. Once LCK recruited, it initiates different intracellular signaling pathways by phosphorylating various substrates ultimately leading to lymphokine production, motility, adhesion and activation of cytotoxic T-lymphocytes (CTLs). Additionally, plays a critical role in thymic selection of CD8+ T-cells. This chain is T-cell surface glycoprotein CD8 beta chain (CD8B), found in Saimiri sciureus (Common squirrel monkey).